Reading from the N-terminus, the 87-residue chain is Acyl carrier protein 3 (87 aa).

Residues 1-79 form the Carrier domain; the sequence is MSNPTVLDQI…DLVTYIEAAL (79 aa). O-(pantetheine 4'-phosphoryl)serine is present on serine 39.

This sequence belongs to the acyl carrier protein (ACP) family. Post-translationally, 4'-phosphopantetheine is transferred from CoA to a specific serine of apo-ACP by AcpS. This modification is essential for activity because fatty acids are bound in thioester linkage to the sulfhydryl of the prosthetic group.

It is found in the cytoplasm. It functions in the pathway lipid metabolism; fatty acid biosynthesis. Carrier of the growing fatty acid chain in fatty acid biosynthesis. This Ralstonia nicotianae (strain ATCC BAA-1114 / GMI1000) (Ralstonia solanacearum) protein is Acyl carrier protein 3.